The primary structure comprises 190 residues: MAEEQKTSKVDVESPAVLAPAKEPTPAPVEVADEKIHNPPPVESKALAVVEKPIEEHTPKKASSGSADRDVILADLEKEKKTSFIKAWEESEKSKAENRAQKKISDVHAWENSKKAAVEAQLRKIEEKLEKKKAQYGEKMKNKVAAIHKLAEEKRAMVEAKKGEELLKAEEMGAKYRATGVVPKATCGCF.

Residues 1–12 (MAEEQKTSKVDV) show a composition bias toward basic and acidic residues. 2 disordered regions span residues 1-45 (MAEE…VESK) and 50-69 (VEKP…SADR). S14 is subject to Phosphoserine. T58 carries the phosphothreonine modification. Positions 92–147 (EKSKAENRAQKKISDVHAWENSKKAAVEAQLRKIEEKLEKKKAQYGEKMKNKVAAI) form a coiled coil.

The protein belongs to the remorin family. May polymerize to form filamentous structures. Expressed in roots, leaves, stems, flowers and siliques, with a maximal expression in apical regions.

Functionally, exhibits a non sequence-specific DNA-binding activity. The sequence is that of Remorin (DBP) from Arabidopsis thaliana (Mouse-ear cress).